The chain runs to 233 residues: MAKVGKRLKAAHEGIDREAFYDLPQAVHLIRERATAKFDESIEVAMNLGVDPRHADQMVRGVVELPHGTGKTMRVAVFAKGAKAEEAKAAGADLVGADELAADIQNGTIDFDRCIATPDMMGVVGRLGKVLGPRGLMPNPKLGTVTMDVATAVKAAKAGQVQFRVEKSGIVHAGVGRASFTEEKLVDNVRAFVDAINKAKPTGAKGTYLKKVSLSSTMGPGLKVNLGTISGAA.

The protein belongs to the universal ribosomal protein uL1 family. Part of the 50S ribosomal subunit.

Functionally, binds directly to 23S rRNA. The L1 stalk is quite mobile in the ribosome, and is involved in E site tRNA release. Its function is as follows. Protein L1 is also a translational repressor protein, it controls the translation of the L11 operon by binding to its mRNA. This Rhodospirillum rubrum (strain ATCC 11170 / ATH 1.1.1 / DSM 467 / LMG 4362 / NCIMB 8255 / S1) protein is Large ribosomal subunit protein uL1.